The chain runs to 332 residues: Tetraacyldisaccharide 4'-kinase (332 aa).

60–67 contributes to the ATP binding site; it reads TVGGTGKT.

The protein belongs to the LpxK family.

The enzyme catalyses a lipid A disaccharide + ATP = a lipid IVA + ADP + H(+). It participates in glycolipid biosynthesis; lipid IV(A) biosynthesis; lipid IV(A) from (3R)-3-hydroxytetradecanoyl-[acyl-carrier-protein] and UDP-N-acetyl-alpha-D-glucosamine: step 6/6. Its function is as follows. Transfers the gamma-phosphate of ATP to the 4'-position of a tetraacyldisaccharide 1-phosphate intermediate (termed DS-1-P) to form tetraacyldisaccharide 1,4'-bis-phosphate (lipid IVA). This is Tetraacyldisaccharide 4'-kinase from Pseudomonas paraeruginosa (strain DSM 24068 / PA7) (Pseudomonas aeruginosa (strain PA7)).